We begin with the raw amino-acid sequence, 213 residues long: Achelase-1 (213 aa).

The Peptidase S1 domain occupies 1–213; the sequence is IVGGSVTTIG…RYTSWIQSNA (213 aa). The cysteines at positions 26 and 42 are disulfide-linked. Catalysis depends on charge relay system residues H41 and D86. C155 and C172 are joined by a disulfide. The active-site Charge relay system is S188.

The protein belongs to the peptidase S1 family. In terms of tissue distribution, hemolymph and saliva of the larval form (caterpillar).

It localises to the secreted. The protein localises to the extracellular space. Sensitive to serine proteinase inhibitors and thiol proteinase inhibitors. Its function is as follows. Fibrinolytic activity; shows preferential cleavage of Arg-Gly bonds in all three fibrinogen chains. Contact with the caterpillars causes severe bleeding, due the anticoagulant effect of the protein. This is Achelase-1 from Lonomia achelous (Giant silkworm moth).